Here is a 451-residue protein sequence, read N- to C-terminus: Phosphoglucosamine mutase (451 aa).

Ser101 functions as the Phosphoserine intermediate in the catalytic mechanism. Positions 101, 243, 245, and 247 each coordinate Mg(2+). Ser101 bears the Phosphoserine mark.

The protein belongs to the phosphohexose mutase family. The cofactor is Mg(2+). Activated by phosphorylation.

It carries out the reaction alpha-D-glucosamine 1-phosphate = D-glucosamine 6-phosphate. In terms of biological role, catalyzes the conversion of glucosamine-6-phosphate to glucosamine-1-phosphate. The chain is Phosphoglucosamine mutase from Geobacter metallireducens (strain ATCC 53774 / DSM 7210 / GS-15).